The sequence spans 199 residues: MAKVLVLYYSAYGHIEKMAEAVAEGAREAGAEVDIKRVPELVPLEIAQKSHFKLDQAAPVATIADLEHYDAIIVGTGTRFGRMSSQMANFLDQAGGLWMRGALNGKVGAAFTSTATQHGGQEVTLFSIITNLLHFGLVIVGLDYGFAGQGRLDEITGGSPYGATTIAASDGSRQPSETELAGARYQGRRVAEVAGKLKG.

The region spanning 4-190 is the Flavodoxin-like domain; that stretch reads VLVLYYSAYG…AGARYQGRRV (187 aa). FMN is bound by residues 10-15 and 78-80; these read SAYGHI and TRF. Residue tyrosine 12 participates in NAD(+) binding. Tryptophan 98 serves as a coordination point for substrate. FMN-binding positions include 113–119 and histidine 134; that span reads STATQHG.

This sequence belongs to the WrbA family. FMN serves as cofactor.

It carries out the reaction a quinone + NADH + H(+) = a quinol + NAD(+). It catalyses the reaction a quinone + NADPH + H(+) = a quinol + NADP(+). This is NAD(P)H dehydrogenase (quinone) from Methylocella silvestris (strain DSM 15510 / CIP 108128 / LMG 27833 / NCIMB 13906 / BL2).